Here is a 539-residue protein sequence, read N- to C-terminus: MHDKILILDFGSQVTQLIARRVREAHVYCEIHPNDVSDEFVREFAPKAVILSGSHASTYEDHQLRAPQAVWDLGVPVLGICYGMQTMAVQLGGKVEWSDHREFGYAEMRAHGHTRLLDGIEDFTTAEGHGMLKVWMSHGDKVAELPPGFALMASTPSCPIAGMADEARGYYAVQFHPEVTHTVKGRQIIERFVLQIAGAKPDWIMSNHIEEAVAKIREQVGDEEVILGLSGGVDSSVAAALIHRAIGDQLTCVFVDHGLLRLNEGKMVLDMFEGRLHAKVVHVDASEQFLGHLTGVTDPEAKRKIIGREFVEVFQAEAQKLSKAKWLAQGTIYPDVVESGGTKTKKATTIKSHHNVGGLPETLGLKLLEPLRDLFKDEVRELGVALGLPPEMVYRHPFPGPGLGVRILGEVKREYADLLRRADAIFIEELRGTTATAQDAAAGLCGEADVGKTWYDLTSQAFAVFLPVKSVGVMGDGRTYDYVTSLRAVQTTDFMTAHWAHLPYALLGRASNRIINEVRGINRVVYDISGKPPATIEWE.

In terms of domain architecture, Glutamine amidotransferase type-1 spans 4 to 202; sequence KILILDFGSQ…VLQIAGAKPD (199 aa). The active-site Nucleophile is the Cys81. Catalysis depends on residues His176 and Glu178. One can recognise a GMPS ATP-PPase domain in the interval 203–395; that stretch reads WIMSNHIEEA…LGLPPEMVYR (193 aa). 230–236 is an ATP binding site; the sequence is SGGVDSS.

Homodimer.

The enzyme catalyses XMP + L-glutamine + ATP + H2O = GMP + L-glutamate + AMP + diphosphate + 2 H(+). Its pathway is purine metabolism; GMP biosynthesis; GMP from XMP (L-Gln route): step 1/1. In terms of biological role, catalyzes the synthesis of GMP from XMP. The polypeptide is GMP synthase [glutamine-hydrolyzing] (Burkholderia ambifaria (strain ATCC BAA-244 / DSM 16087 / CCUG 44356 / LMG 19182 / AMMD) (Burkholderia cepacia (strain AMMD))).